Here is a 282-residue protein sequence, read N- to C-terminus: Putative hydrolase BceJ2315_61450 (282 aa).

Glutamate 124, glutamate 126, and aspartate 155 together coordinate Mg(2+).

The protein belongs to the FAH family. Mg(2+) serves as cofactor.

The polypeptide is Putative hydrolase BceJ2315_61450 (Burkholderia cenocepacia (strain ATCC BAA-245 / DSM 16553 / LMG 16656 / NCTC 13227 / J2315 / CF5610) (Burkholderia cepacia (strain J2315))).